We begin with the raw amino-acid sequence, 155 residues long: Small ribosomal subunit protein uS7 (155 aa).

It belongs to the universal ribosomal protein uS7 family. Part of the 30S ribosomal subunit. Contacts proteins S9 and S11.

One of the primary rRNA binding proteins, it binds directly to 16S rRNA where it nucleates assembly of the head domain of the 30S subunit. Is located at the subunit interface close to the decoding center, probably blocks exit of the E-site tRNA. In Nautilia profundicola (strain ATCC BAA-1463 / DSM 18972 / AmH), this protein is Small ribosomal subunit protein uS7.